We begin with the raw amino-acid sequence, 205 residues long: Large ribosomal subunit protein uL18 (205 aa).

Belongs to the universal ribosomal protein uL18 family. As to quaternary structure, part of the 50S ribosomal subunit. Contacts the 5S and 23S rRNAs.

This is one of the proteins that bind and probably mediate the attachment of the 5S RNA into the large ribosomal subunit, where it forms part of the central protuberance. This is Large ribosomal subunit protein uL18 from Pyrobaculum aerophilum (strain ATCC 51768 / DSM 7523 / JCM 9630 / CIP 104966 / NBRC 100827 / IM2).